Here is a 352-residue protein sequence, read N- to C-terminus: Small ribosomal subunit biogenesis GTPase RsgA (352 aa).

The span at 1–15 (MTKRKLTQNQKRRIH) shows a compositional bias: basic residues. The tract at residues 1 to 26 (MTKRKLTQNQKRRIHSNNVKALDRHH) is disordered. The 169-residue stretch at 106–274 (ENEIARPDYY…LIDSPGIREF (169 aa)) folds into the CP-type G domain. GTP-binding positions include 162-165 (NKVD) and 216-224 (GQSGVGKSS). Zn(2+) is bound by residues Cys-298, Cys-303, His-305, and Cys-311.

Belongs to the TRAFAC class YlqF/YawG GTPase family. RsgA subfamily. As to quaternary structure, monomer. Associates with 30S ribosomal subunit, binds 16S rRNA. Zn(2+) is required as a cofactor.

The protein localises to the cytoplasm. Its function is as follows. One of several proteins that assist in the late maturation steps of the functional core of the 30S ribosomal subunit. Helps release RbfA from mature subunits. May play a role in the assembly of ribosomal proteins into the subunit. Circularly permuted GTPase that catalyzes slow GTP hydrolysis, GTPase activity is stimulated by the 30S ribosomal subunit. The polypeptide is Small ribosomal subunit biogenesis GTPase RsgA (Mannheimia succiniciproducens (strain KCTC 0769BP / MBEL55E)).